The chain runs to 310 residues: Protoheme IX farnesyltransferase (310 aa).

Helical transmembrane passes span 26 to 46 (VMSLVVFTALVGLLVAPATVH), 47 to 67 (PMIALTGILFIALGAGASGAL), 95 to 115 (GEALGLGLALSGIAVVMLGLA), 118 to 138 (LFAAGLLAFTIFFYAVVYSMW), 147 to 167 (IVIGGAAGAFPPMIGWAVATG), 174 to 194 (LFMFALIFMWTPPHFWSLALF), 220 to 240 (VLAYALLLAPLAVAGAFTGIG), 243 to 263 (LYLVVALALNGWLLRGAVRIW), and 281 to 301 (FFRFSLYYLFLHFGAILAEAA).

This sequence belongs to the UbiA prenyltransferase family. Protoheme IX farnesyltransferase subfamily. Interacts with CtaA.

The protein localises to the cell inner membrane. The enzyme catalyses heme b + (2E,6E)-farnesyl diphosphate + H2O = Fe(II)-heme o + diphosphate. Its pathway is porphyrin-containing compound metabolism; heme O biosynthesis; heme O from protoheme: step 1/1. Its function is as follows. Converts heme B (protoheme IX) to heme O by substitution of the vinyl group on carbon 2 of heme B porphyrin ring with a hydroxyethyl farnesyl side group. This Cereibacter sphaeroides (strain ATCC 17025 / ATH 2.4.3) (Rhodobacter sphaeroides) protein is Protoheme IX farnesyltransferase.